Here is a 142-residue protein sequence, read N- to C-terminus: MAKKVEAYVKLQVAAGMANPSPPVGPALGQRGVNIMEFCKAFNARTESLEKGLPIPVVITVYSDRSFTFETKTPPASVLLKKAAGIKSGSARPNTAKVGTITDAQIQEIAATKAADMTGADIEAMKRSIAGTARSMGLVVEG.

Belongs to the universal ribosomal protein uL11 family. As to quaternary structure, part of the ribosomal stalk of the 50S ribosomal subunit. Interacts with L10 and the large rRNA to form the base of the stalk. L10 forms an elongated spine to which L12 dimers bind in a sequential fashion forming a multimeric L10(L12)X complex. Post-translationally, one or more lysine residues are methylated.

Functionally, forms part of the ribosomal stalk which helps the ribosome interact with GTP-bound translation factors. This Vibrio cholerae serotype O1 (strain ATCC 39541 / Classical Ogawa 395 / O395) protein is Large ribosomal subunit protein uL11.